The sequence spans 540 residues: Zinc finger CCCH domain-containing protein 46 (540 aa).

The C3H1-type zinc-finger motif lies at 148 to 175 (GFGGVPCSYFARGFCKNGASCRFVHSDG). Residues 258–334 (RQIYLTFPAD…RVLVKPYKEK (77 aa)) form the RRM domain. Basic and acidic residues-rich tracts occupy residues 337–351 (VPDK…EREL) and 436–450 (EYDG…SKEG). Disordered stretches follow at residues 337–365 (VPDK…DVLG), 436–469 (EYDG…LPDS), and 490–514 (SDLW…SFNS). Position 451 is a phosphoserine (S451). Residues 490–511 (SDLWSPSSDNDDNSTPSTLSDS) show a composition bias toward low complexity.

In terms of biological role, possesses RNA-binding and ribonuclease activities in vitro. This is Zinc finger CCCH domain-containing protein 46 from Arabidopsis thaliana (Mouse-ear cress).